The primary structure comprises 314 residues: NADH-ubiquinone oxidoreductase chain 1 (314 aa).

8 consecutive transmembrane segments (helical) span residues 5-25 (IMPLIGSLLLVICVMVGVAFL), 78-98 (FSPVFSLFLSLLIWMCIPYLI), 105-125 (LGVLFFLCCTSLGVYTVMIAG), 152-172 (ALILLSFIFLVGNYNFLSFYF), 176-196 (YVWFIFFCFPLGLVWLASCLA), 227-247 (LIFLAEYSSILFMSMLFVVIF), 251-271 (DIYSFMFFLKLSFISFIFIWV), and 294-314 (LSLNYLFFFVGLKIFFISLLF).

This sequence belongs to the complex I subunit 1 family.

The protein localises to the mitochondrion inner membrane. It carries out the reaction a ubiquinone + NADH + 5 H(+)(in) = a ubiquinol + NAD(+) + 4 H(+)(out). Functionally, core subunit of the mitochondrial membrane respiratory chain NADH dehydrogenase (Complex I) that is believed to belong to the minimal assembly required for catalysis. Complex I functions in the transfer of electrons from NADH to the respiratory chain. The immediate electron acceptor for the enzyme is believed to be ubiquinone. This chain is NADH-ubiquinone oxidoreductase chain 1 (mt:ND1), found in Anopheles gambiae (African malaria mosquito).